The following is a 32-amino-acid chain: Fibrinolytic enzyme 2 (32 aa).

Residues 1–32 enclose the Peptidase S8 domain; it reads ISGTSMSCPHVAGRAYVLDTSLRVYLLDTGLR. The Charge relay system role is filled by Ser-5.

It belongs to the peptidase S8 family.

Its activity is regulated as follows. Inhibited by PMSF. Not inhibited by benzamidine, aprotinin, SBTI, EDTA, EGTA, 2-mercaptoethanol, iodoacetic acid or pepstatin A. In terms of biological role, serine protease. Has fibrinolytic and fibrinogenolytic but no plasminogenolytic activity. Cleaves after Arg and Lys residues. Cleaves fibrinogen alpha chain, beta chain and gamma chain in that order. The chain is Fibrinolytic enzyme 2 from Hediste japonica (Polychaete worm).